The following is a 78-amino-acid chain: MRFLHFLIVAVLLASFMESGAMPRNPKKKRGWDTPAPCRYCQWNGPQCCVYYCSSCNYEEAREEGHYVSSHLLERQGR.

A signal peptide spans 1–21 (MRFLHFLIVAVLLASFMESGA). Positions 22–26 (MPRNP) are excised as a propeptide. Cystine bridges form between cysteine 38-cysteine 49, cysteine 41-cysteine 53, and cysteine 48-cysteine 56. Glutamine 76 bears the Glutamine amide mark.

Expressed by the venom duct.

The protein localises to the secreted. Functionally, probable neurotoxin with unknown target. Possibly targets ion channels. In Californiconus californicus (California cone), this protein is Conotoxin Cal6.3a.